A 407-amino-acid polypeptide reads, in one-letter code: Aminoacylase-1 (407 aa).

Position 2 is an N-acetylalanine (A2). Position 80 (H80) interacts with Zn(2+). The active site involves D82. A Zn(2+)-binding site is contributed by D113. Catalysis depends on E147, which acts as the Proton acceptor. Zn(2+) contacts are provided by E148, E175, and H372.

Belongs to the peptidase M20A family. In terms of assembly, homodimer. Interacts with SPHK1. The cofactor is Zn(2+).

The protein localises to the cytoplasm. The catalysed reaction is an N-acyl-L-amino acid + H2O = an L-alpha-amino acid + a carboxylate. The enzyme catalyses N-acetyl-L-methionine + H2O = L-methionine + acetate. It catalyses the reaction N-acetyl-L-glutamine + H2O = L-glutamine + acetate. Catalyzes the hydrolysis of N-acetylated amino acids to acetate and free amino acids. This Sus scrofa (Pig) protein is Aminoacylase-1 (ACY1).